Here is a 106-residue protein sequence, read N- to C-terminus: Thiosulfate sulfurtransferase GlpE (106 aa).

The Rhodanese domain maps to 17–105 (SRGEARLVDI…WHRASLPVEA (89 aa)). C65 acts as the Cysteine persulfide intermediate in catalysis.

This sequence belongs to the GlpE family.

It localises to the cytoplasm. It catalyses the reaction thiosulfate + hydrogen cyanide = thiocyanate + sulfite + 2 H(+). The enzyme catalyses thiosulfate + [thioredoxin]-dithiol = [thioredoxin]-disulfide + hydrogen sulfide + sulfite + 2 H(+). Its function is as follows. Transferase that catalyzes the transfer of sulfur from thiosulfate to thiophilic acceptors such as cyanide or dithiols. May function in a CysM-independent thiosulfate assimilation pathway by catalyzing the conversion of thiosulfate to sulfite, which can then be used for L-cysteine biosynthesis. The polypeptide is Thiosulfate sulfurtransferase GlpE (Vibrio vulnificus (strain CMCP6)).